The following is a 199-amino-acid chain: Probable nicotinate-nucleotide adenylyltransferase (199 aa).

Belongs to the NadD family.

The enzyme catalyses nicotinate beta-D-ribonucleotide + ATP + H(+) = deamido-NAD(+) + diphosphate. It participates in cofactor biosynthesis; NAD(+) biosynthesis; deamido-NAD(+) from nicotinate D-ribonucleotide: step 1/1. Functionally, catalyzes the reversible adenylation of nicotinate mononucleotide (NaMN) to nicotinic acid adenine dinucleotide (NaAD). The sequence is that of Probable nicotinate-nucleotide adenylyltransferase from Roseobacter denitrificans (strain ATCC 33942 / OCh 114) (Erythrobacter sp. (strain OCh 114)).